Consider the following 326-residue polypeptide: N-(2-amino-2-carboxyethyl)-L-glutamate synthase (326 aa).

Lys-47 carries the N6-(pyridoxal phosphate)lysine modification. Pyridoxal 5'-phosphate contacts are provided by residues Asn-77, 185–189 (STTGS), and Ser-272.

The protein belongs to the cysteine synthase/cystathionine beta-synthase family. SbnA subfamily. In terms of assembly, homodimer. Pyridoxal 5'-phosphate serves as cofactor.

It carries out the reaction O-phospho-L-serine + L-glutamate = N-[(2S)-2-amino-2-carboxyethyl]-L-glutamate + phosphate + H(+). The protein operates within siderophore biosynthesis. In terms of biological role, catalyzes the synthesis of N-((2S)-2-amino-2-carboxyethyl)-L-glutamate (ACEGA) from O-phospho-L-serine and L-glutamate. Involved in the biosynthesis of L-2,3-diaminopropionic acid (L-Dap), a precursor of staphyloferrin B and antibiotics. The chain is N-(2-amino-2-carboxyethyl)-L-glutamate synthase (sbnA) from Staphylococcus aureus (strain N315).